Reading from the N-terminus, the 200-residue chain is Small ribosomal subunit protein uS5 (200 aa).

The segment covering 1–22 (MAEERGEKRGRRRDRENPRDRD) has biased composition (basic and acidic residues). Positions 1-26 (MAEERGEKRGRRRDRENPRDRDDESS) are disordered. One can recognise an S5 DRBM domain in the interval 28-91 (LVDKLVGINR…EEAKRNLVRI (64 aa)).

Belongs to the universal ribosomal protein uS5 family. Part of the 30S ribosomal subunit. Contacts proteins S4 and S8.

Functionally, with S4 and S12 plays an important role in translational accuracy. In terms of biological role, located at the back of the 30S subunit body where it stabilizes the conformation of the head with respect to the body. This chain is Small ribosomal subunit protein uS5, found in Hyphomonas neptunium (strain ATCC 15444).